Here is a 343-residue protein sequence, read N- to C-terminus: L-threonine 3-dehydrogenase (343 aa).

Cysteine 38 provides a ligand contact to Zn(2+). Catalysis depends on charge relay system residues threonine 40 and histidine 43. Zn(2+) contacts are provided by histidine 63, glutamate 64, cysteine 93, cysteine 96, cysteine 99, and cysteine 107. Residues isoleucine 175, aspartate 195, arginine 200, 262-264, and 286-287 each bind NAD(+); these read LGI and IY.

This sequence belongs to the zinc-containing alcohol dehydrogenase family. As to quaternary structure, homotetramer. Requires Zn(2+) as cofactor.

It is found in the cytoplasm. The catalysed reaction is L-threonine + NAD(+) = (2S)-2-amino-3-oxobutanoate + NADH + H(+). The protein operates within amino-acid degradation; L-threonine degradation via oxydo-reductase pathway; glycine from L-threonine: step 1/2. Catalyzes the NAD(+)-dependent oxidation of L-threonine to 2-amino-3-ketobutyrate. This chain is L-threonine 3-dehydrogenase, found in Burkholderia thailandensis (strain ATCC 700388 / DSM 13276 / CCUG 48851 / CIP 106301 / E264).